Here is a 315-residue protein sequence, read N- to C-terminus: Glutamyl-Q tRNA(Asp) synthetase (315 aa).

Residues 21 to 25 and Glu-63 contribute to the L-glutamate site; that span reads RFAPS. The 'HIGH' region motif lies at 24-34; it reads PSPSGLLHFGS. 4 residues coordinate Zn(2+): Cys-119, Cys-121, Tyr-133, and Cys-137. Positions 190 and 208 each coordinate L-glutamate. A 'KMSKS' region motif is present at residues 251 to 255; sequence KLSKQ. An ATP-binding site is contributed by Lys-254.

The protein belongs to the class-I aminoacyl-tRNA synthetase family. GluQ subfamily. It depends on Zn(2+) as a cofactor.

In terms of biological role, catalyzes the tRNA-independent activation of glutamate in presence of ATP and the subsequent transfer of glutamate onto a tRNA(Asp). Glutamate is transferred on the 2-amino-5-(4,5-dihydroxy-2-cyclopenten-1-yl) moiety of the queuosine in the wobble position of the QUC anticodon. This chain is Glutamyl-Q tRNA(Asp) synthetase, found in Colwellia psychrerythraea (strain 34H / ATCC BAA-681) (Vibrio psychroerythus).